Consider the following 398-residue polypeptide: MSDMLPLAMYALNVEPYTHTPAVLLDTPVTVRITMAAIDPEPFDEDKKPSTLRIIRRNPVYLDAGEVDEEKLIEELEGDEAAEDGDEASDDDKEEEDEDEDVDEDDEDDDEDDDGEDEYEECVVVTLSPETRCQQAIDITIAPEEDVQFLVTGSYTISLTGNYVKHPFDEPLEDLYSDEDSEEYSDDELDQEIEEDDELDHDEASSEESDEDQEFYDAISEGDEDIDEQLAKLEETSDVEAHLEDLIAKDNKKKRKQEQLDEQPETKKSKKTKDEKNTKATENEKKNKAQVLEGGVIIEDRKIGEGPKAKKGSKVGMRYIGKLKNGKVFDKNTSGKPFYFKLHRGEVIKGWDIGVTGMAIGGERRIVIPAPYAYGKQTLPGIPANSELTFDVKLVSLK.

Disordered regions lie at residues 66–120 (EVDE…DEYE), 164–232 (VKHP…QLAK), and 245–288 (DLIA…KKNK). Acidic residues predominate over residues 170–228 (EPLEDLYSDEDSEEYSDDELDQEIEEDDELDHDEASSEESDEDQEFYDAISEGDEDIDE). The segment covering 264 to 287 (PETKKSKKTKDEKNTKATENEKKN) has biased composition (basic and acidic residues). Positions 312-398 (GSKVGMRYIG…TFDVKLVSLK (87 aa)) constitute a PPIase FKBP-type domain.

The protein belongs to the FKBP-type PPIase family. FKBP3/4 subfamily. As to quaternary structure, binds to histones H3 and H4.

The protein resides in the nucleus. It catalyses the reaction [protein]-peptidylproline (omega=180) = [protein]-peptidylproline (omega=0). Its activity is regulated as follows. Inhibited by both FK506 and rapamycin. PPIase that acts as a histone chaperone. Histone proline isomerase that increases the rate of cis-trans isomerization at prolines on the histone H3 N-terminal tail. Proline isomerization influences H3 methylation thereby regulating gene expression. This is FK506-binding protein 4 (FPR4) from Candida glabrata (strain ATCC 2001 / BCRC 20586 / JCM 3761 / NBRC 0622 / NRRL Y-65 / CBS 138) (Yeast).